The following is a 54-amino-acid chain: Photosystem II reaction center protein K (54 aa).

The propeptide occupies 1–17; that stretch reads MFQISLDMISNKINLLG. The chain crosses the membrane as a helical span at residues 29 to 49; the sequence is IVDVLPIIPILFFLLAFVWQA.

This sequence belongs to the PsbK family. As to quaternary structure, PSII is composed of 1 copy each of membrane proteins PsbA, PsbB, PsbC, PsbD, PsbE, PsbF, PsbH, PsbI, PsbJ, PsbK, PsbL, PsbM, PsbT, PsbY, PsbZ, Psb30/Ycf12, at least 3 peripheral proteins of the oxygen-evolving complex and a large number of cofactors. It forms dimeric complexes.

Its subcellular location is the plastid. The protein resides in the chloroplast thylakoid membrane. One of the components of the core complex of photosystem II (PSII). PSII is a light-driven water:plastoquinone oxidoreductase that uses light energy to abstract electrons from H(2)O, generating O(2) and a proton gradient subsequently used for ATP formation. It consists of a core antenna complex that captures photons, and an electron transfer chain that converts photonic excitation into a charge separation. The protein is Photosystem II reaction center protein K of Euglena stellata.